The chain runs to 593 residues: Insulin-like growth factor 2 mRNA-binding protein 3-B (593 aa).

RRM domains lie at 2-75 (NKLY…HSVP) and 81-156 (RKLQ…YIPD). Residues 159–208 (ATPQSPSQQLQQPQQQHPQGRRGFGQRGPARQGSPGAAARPKPQSEVPLR) are disordered. Low complexity predominate over residues 161–176 (PQSPSQQLQQPQQQHP). KH domains are found at residues 204-269 (EVPL…CKII) and 285-352 (EIPL…EEEV). Residues 390–402 (SGMPPPSAGVSSP) show a composition bias toward low complexity. Positions 390–412 (SGMPPPSAGVSSPTTSASYPPFG) are disordered. 2 KH domains span residues 417-482 (SETV…QGRI) and 499-565 (KLEA…QRKI). Residues 571-593 (QVRRQQQQQQKTAQSGQPQPRRK) are disordered.

Belongs to the RRM IMP/VICKZ family. As to quaternary structure, homodimer and multimer. Associates with microtubules. Interaction with a translocation machinery protein TRAPA of the endoplasmic reticulum. Component of a mRNP complex, at least composed of DAZAP1, IGF2BP3, STAU and VgRBP60. The mRNP complex with DAZAP1, IGF2BP3, STAU and VgRBP60 is only found in the cytoplasm. Interacts with a hnRNP 1 related RNA transport protein VgRBP60 both in the nucleus (in an RNA-independent manner) and the cytoplasm (in an RNA-dependent manner). Found in a B3 activator complex. In terms of tissue distribution, expressed in oocytes, kidney and pancreas (at protein level). Expressed in oocytes, kidney and pancreas.

Its subcellular location is the nucleus. It is found in the cytoplasm. It localises to the endoplasmic reticulum. Functionally, RNA-binding protein that acts as a regulator of mRNA transport and localization. Binds to the RNA sequence motif 5'-UUCAC-3'. Preferentially binds to N6-methyladenosine (m6A)-containing mRNAs and increases their stability. Mediates the specific association of Vg1 RNA to microtubules. May regulate mRNA translation. Binds specifically to the vegetal localization elements (VLE or VgLE) in the 3'-UTR of Vg1 and VegT mRNAs. Binds to the Vg1 and VegT mRNAs in both the nucleus and the cytoplasm. May regulate mRNA translation. Acts as a transcription regulator. Binds to the 5'-[TA]GGTTACT-3' motif within element 3 of the TFIIIA gene promoter. This is Insulin-like growth factor 2 mRNA-binding protein 3-B (igf2bp3-b) from Xenopus laevis (African clawed frog).